A 759-amino-acid chain; its full sequence is GTPase-activating protein rrc-1 (759 aa).

The SH3 domain occupies 164–243 (PAIAAAVVTK…PRDCVMLIDD (80 aa)). Residues 280 to 473 (LELTDLYMRT…FFIENSESLF (194 aa)) enclose the Rho-GAP domain. Residues 591 to 624 (ARSMRPTSRPPPSPRTRRARFSNGSSNNVQKLNE) form a disordered region. The span at 612–622 (SNGSSNNVQKL) shows a compositional bias: polar residues.

In terms of tissue distribution, expressed in coelomocytes, excretory cells, uterine-seam cells and GLR cells.

Functionally, functions as a GTPase-activating protein (GAP) for ced-10/rac-1 and CDC42. In Caenorhabditis elegans, this protein is GTPase-activating protein rrc-1 (rrc-1).